The following is a 246-amino-acid chain: Major prion protein (246 aa).

The N-terminal stretch at 1–15 (MLVVFVATWSDLGLC) is a signal peptide. The interaction with GRB2, ERI3 and SYN1 stretch occupies residues 16-223 (KKRPKPGGWN…ESQAYYQRGS (208 aa)). A disordered region spans residues 18–100 (RPKPGGWNTG…QWHKPSKPKT (83 aa)). 5 consecutive repeat copies span residues 44-52 (PQGGGGWGQ), 53-60 (PHGGGWGQ), 61-68 (PHGGGWGQ), 69-76 (PHGGGWGQ), and 77-84 (PHGGGWGQ). The 5 X 8 AA tandem repeats of P-H-G-G-G-W-G-Q stretch occupies residues 44-84 (PQGGGGWGQPHGGGWGQPHGGGWGQPHGGGWGQPHGGGWGQ). The segment covering 45-88 (QGGGGWGQPHGGGWGQPHGGGWGQPHGGGWGQPHGGGWGQGGGT) has biased composition (gly residues). Cu(2+)-binding residues include H54, G55, G56, H62, G63, G64, H70, G71, G72, H78, G79, and G80. Over residues 91–100 (QWHKPSKPKT) the composition is skewed to basic residues. Cysteines 172 and 207 form a disulfide. N174 and N190 each carry an N-linked (GlcNAc...) asparagine glycan. S223 is lipidated: GPI-anchor amidated serine. Positions 224–246 (SMVLFSSPPVILLISFLIFLIVG) are cleaved as a propeptide — removed in mature form.

This sequence belongs to the prion family. Monomer and homodimer. Has a tendency to aggregate into amyloid fibrils containing a cross-beta spine, formed by a steric zipper of superposed beta-strands. Soluble oligomers may represent an intermediate stage on the path to fibril formation. Copper binding may promote oligomerization. Interacts with GRB2, APP, ERI3/PRNPIP and SYN1. Mislocalized cytosolically exposed PrP interacts with MGRN1; this interaction alters MGRN1 subcellular location and causes lysosomal enlargement. Interacts with KIAA1191.

It localises to the cell membrane. The protein resides in the golgi apparatus. Functionally, its primary physiological function is unclear. Has cytoprotective activity against internal or environmental stresses. May play a role in neuronal development and synaptic plasticity. May be required for neuronal myelin sheath maintenance. May play a role in iron uptake and iron homeostasis. Soluble oligomers are toxic to cultured neuroblastoma cells and induce apoptosis (in vitro). Association with GPC1 (via its heparan sulfate chains) targets PRNP to lipid rafts. Also provides Cu(2+) or Zn(2+) for the ascorbate-mediated GPC1 deaminase degradation of its heparan sulfate side chains. This is Major prion protein (PRNP) from Erythrocebus patas (Red guenon).